Reading from the N-terminus, the 75-residue chain is Small ribosomal subunit protein bS18 (75 aa).

Belongs to the bacterial ribosomal protein bS18 family. In terms of assembly, part of the 30S ribosomal subunit. Forms a tight heterodimer with protein bS6.

In terms of biological role, binds as a heterodimer with protein bS6 to the central domain of the 16S rRNA, where it helps stabilize the platform of the 30S subunit. The chain is Small ribosomal subunit protein bS18 from Pseudoalteromonas atlantica (strain T6c / ATCC BAA-1087).